The sequence spans 178 residues: ATP synthase subunit delta (178 aa).

This sequence belongs to the ATPase delta chain family. As to quaternary structure, F-type ATPases have 2 components, F(1) - the catalytic core - and F(0) - the membrane proton channel. F(1) has five subunits: alpha(3), beta(3), gamma(1), delta(1), epsilon(1). F(0) has three main subunits: a(1), b(2) and c(10-14). The alpha and beta chains form an alternating ring which encloses part of the gamma chain. F(1) is attached to F(0) by a central stalk formed by the gamma and epsilon chains, while a peripheral stalk is formed by the delta and b chains.

It is found in the cell membrane. F(1)F(0) ATP synthase produces ATP from ADP in the presence of a proton or sodium gradient. F-type ATPases consist of two structural domains, F(1) containing the extramembraneous catalytic core and F(0) containing the membrane proton channel, linked together by a central stalk and a peripheral stalk. During catalysis, ATP synthesis in the catalytic domain of F(1) is coupled via a rotary mechanism of the central stalk subunits to proton translocation. Functionally, this protein is part of the stalk that links CF(0) to CF(1). It either transmits conformational changes from CF(0) to CF(1) or is implicated in proton conduction. This chain is ATP synthase subunit delta, found in Streptococcus agalactiae serotype Ia (strain ATCC 27591 / A909 / CDC SS700).